Consider the following 223-residue polypeptide: Killer cell lectin-like receptor subfamily B member 1B allele B (223 aa).

Residues 1–43 (MDSTTLVYADLNLARIQEPKHDSPPSLSPDTCRCPRWHRLALK) are Cytoplasmic-facing. The ITIM motif signature appears at 6–11 (LVYADL). The LCK-binding motif motif lies at 32 to 35 (CRCP). The helical; Signal-anchor for type II membrane protein transmembrane segment at 44–64 (FGCAGLILLVLVVIGLCVLVL) threads the bilayer. Residues 65–223 (SVQKSSVQKI…LNHETPCNDS (159 aa)) lie on the Extracellular side of the membrane. In terms of domain architecture, C-type lectin spans 101-211 (HRDKCFHVSQ…CSSDNRWICQ (111 aa)). 2 disulfide bridges follow: Cys122–Cys210 and Cys189–Cys202.

As to quaternary structure, homodimer; disulfide-linked. Interacts with tyrosine kinase LCK. Binds PTPN6/SHP-1 in a phosphorylation-dependent manner. Expressed in NK cells and a subset of T-cells.

The protein localises to the membrane. Functionally, receptor for CLEC2D/OCIL. Ligand-binding contributes to inhibition of cytotoxic natural killer (NK) cells. May mediate MHC class I-independent 'missing-self' recognition of allografts, tumor cells and virus-infected cells. In Mus musculus (Mouse), this protein is Killer cell lectin-like receptor subfamily B member 1B allele B (Klrb1b).